The primary structure comprises 296 residues: Guided entry of tail-anchored proteins factor CAMLG (296 aa).

The segment at 1 to 79 is disordered; that stretch reads MESMAVATDG…SDKLNSLSVP (79 aa). Residues 1 to 189 lie on the Cytoplasmic side of the membrane; that stretch reads MESMAVATDG…NTTEEFDSFR (189 aa). Serine 55 is subject to Phosphoserine. Positions 61-72 are enriched in basic and acidic residues; it reads SQTKSKQQDSDK. A helical membrane pass occupies residues 190-207; it reads IFRLVGCALLALGVRAFV. Residues 208–212 are Lumenal-facing; sequence CKYLS. Cysteine 208 and cysteine 284 form a disulfide bridge. A helical transmembrane segment spans residues 213–231; the sequence is IFAPFLTLQLAYMGLYKYF. Residues 232–269 are Cytoplasmic-facing; it reads PKSEKKIKTTVLTAALLLSGIPAEVINRSMDTYSKMGE. A helical membrane pass occupies residues 270–288; that stretch reads VFTDLCVYFFTFIFCHELL. Over 289–296 the chain is Lumenal; the sequence is DYWGSEVP.

Component of the Golgi to ER traffic (GET) complex, which is composed of GET1/WRB, CAMLG/GET2 and GET3/TRC40. Within the complex, GET1 and CAMLG form a heterotetramer which is stabilized by phosphatidylinositol binding and which binds to the GET3 homodimer. Interacts (via C-terminus) with GET1. Interacts (via N-terminus) with GET3. GET3 shows a higher affinity for CAMLG than for GET1. Interacts (via N-terminus) with TNFRSF13B/TACI (via C-terminus). As to quaternary structure, (Microbial infection) Interacts with human herpes virus 8/HHV-8 protein K7; this interaction modulates intracellular calcium concentration. As to expression, ubiquitous. Highest levels in brain, testis and ovary.

It localises to the endoplasmic reticulum membrane. Its function is as follows. Required for the post-translational delivery of tail-anchored (TA) proteins to the endoplasmic reticulum. Together with GET1/WRB, acts as a membrane receptor for soluble GET3/TRC40, which recognizes and selectively binds the transmembrane domain of TA proteins in the cytosol. Required for the stability of GET1. Stimulates calcium signaling in T cells through its involvement in elevation of intracellular calcium. Essential for the survival of peripheral follicular B cells. This Homo sapiens (Human) protein is Guided entry of tail-anchored proteins factor CAMLG.